The sequence spans 510 residues: uncharacterized protein (510 aa).

At 1 to 89 (MTSSLDDIEP…QGQRKKVLLK (89 aa)) the chain is on the lumenal side. A disordered region spans residues 38-76 (AVSQGVPDMDGQTTDSSKDPEPNSEDKKAFPPSSGSFFS). Positions 53 to 66 (SSKDPEPNSEDKKA) are enriched in basic and acidic residues. Positions 67–76 (FPPSSGSFFS) are enriched in low complexity. A helical membrane pass occupies residues 90-110 (FVFTNCLLAIICFTMFVLFWG). Topologically, residues 111-123 (ALYDTSKYLHKVK) are cytoplasmic. The helical transmembrane segment at 124-144 (LLVVIQEPPVVILDNNSSMVV) threads the bilayer. At 145-312 (PSISYALPTF…TDRILLAPTQ (168 aa)) the chain is on the lumenal side. A helical transmembrane segment spans residues 313–333 (IGVVYCLLLTFFQFLLYGPLH). The Cytoplasmic segment spans residues 334 to 349 (VEMAKVLRPANGLIYR). A helical membrane pass occupies residues 350 to 370 (IAMSWFTFFFASLFFCTTTAI). Residues 371–381 (FQVDFTKSFGR) lie on the Lumenal side of the membrane. Residues 382–402 (GGFVVYWMSTWLFMLAAGGAN) form a helical membrane-spanning segment. Over 403 to 416 (ENAVMLVITLGPQY) the chain is Cytoplasmic. The chain crosses the membrane as a helical span at residues 417–437 (LGFWILSFVILNIAPSFFPLA). Over 438–474 (LNNNVYRYGYMMPVHNVIDIYRVIFFDVTRRKMGRNY) the chain is Lumenal. The chain crosses the membrane as a helical span at residues 475–495 (GILVALIALNTALLPFVGKYA). At 496 to 510 (SRKLKQKALVAAKQS) the chain is on the cytoplasmic side.

It to yeast SNG1.

It is found in the endoplasmic reticulum membrane. This is an uncharacterized protein from Saccharomyces cerevisiae (strain ATCC 204508 / S288c) (Baker's yeast).